We begin with the raw amino-acid sequence, 252 residues long: Imidazole glycerol phosphate synthase subunit HisF (252 aa).

Active-site residues include Asp-11 and Asp-130.

It belongs to the HisA/HisF family. As to quaternary structure, heterodimer of HisH and HisF.

The protein localises to the cytoplasm. The enzyme catalyses 5-[(5-phospho-1-deoxy-D-ribulos-1-ylimino)methylamino]-1-(5-phospho-beta-D-ribosyl)imidazole-4-carboxamide + L-glutamine = D-erythro-1-(imidazol-4-yl)glycerol 3-phosphate + 5-amino-1-(5-phospho-beta-D-ribosyl)imidazole-4-carboxamide + L-glutamate + H(+). The protein operates within amino-acid biosynthesis; L-histidine biosynthesis; L-histidine from 5-phospho-alpha-D-ribose 1-diphosphate: step 5/9. Its function is as follows. IGPS catalyzes the conversion of PRFAR and glutamine to IGP, AICAR and glutamate. The HisF subunit catalyzes the cyclization activity that produces IGP and AICAR from PRFAR using the ammonia provided by the HisH subunit. This chain is Imidazole glycerol phosphate synthase subunit HisF, found in Bacillus thuringiensis (strain Al Hakam).